A 437-amino-acid polypeptide reads, in one-letter code: ATP-dependent RNA helicase RhlB (437 aa).

A Q motif motif is present at residues 9-37; the sequence is KKFADFPLHKEVQQALNEVGFEFCTPIQA. The Helicase ATP-binding domain occupies 40–219; sequence LPILLAKKDI…YDHMNEPEKV (180 aa). Position 53 to 60 (53 to 60) interacts with ATP; that stretch reads AQTGTGKT. Positions 165–168 match the DEAD box motif; the sequence is DEAD. The Helicase C-terminal domain occupies 243–390; it reads KMPLLLSLLE…VTSYDSEALL (148 aa). Residues 394–437 form a disordered region; it reads PAPKRIHRKPSSHSRNSRDRSGSRPQGGHRGNAPRRHDKTRRHS. The segment covering 425–437 has biased composition (basic residues); sequence NAPRRHDKTRRHS.

This sequence belongs to the DEAD box helicase family. RhlB subfamily. Component of the RNA degradosome, which is a multiprotein complex involved in RNA processing and mRNA degradation.

It is found in the cytoplasm. It catalyses the reaction ATP + H2O = ADP + phosphate + H(+). In terms of biological role, DEAD-box RNA helicase involved in RNA degradation. Has RNA-dependent ATPase activity and unwinds double-stranded RNA. This Shewanella piezotolerans (strain WP3 / JCM 13877) protein is ATP-dependent RNA helicase RhlB.